Consider the following 134-residue polypeptide: Large ribosomal subunit protein bL12 (134 aa).

The protein belongs to the bacterial ribosomal protein bL12 family. Homodimer. Part of the ribosomal stalk of the 50S ribosomal subunit. Forms a multimeric L10(L12)X complex, where L10 forms an elongated spine to which 2 to 4 L12 dimers bind in a sequential fashion. Binds GTP-bound translation factors.

Its function is as follows. Forms part of the ribosomal stalk which helps the ribosome interact with GTP-bound translation factors. Is thus essential for accurate translation. The chain is Large ribosomal subunit protein bL12 from Chlamydia abortus (strain DSM 27085 / S26/3) (Chlamydophila abortus).